Consider the following 325-residue polypeptide: Tetraacyldisaccharide 4'-kinase (325 aa).

53 to 60 (SVGGNGKT) provides a ligand contact to ATP.

This sequence belongs to the LpxK family.

It catalyses the reaction a lipid A disaccharide + ATP = a lipid IVA + ADP + H(+). It participates in glycolipid biosynthesis; lipid IV(A) biosynthesis; lipid IV(A) from (3R)-3-hydroxytetradecanoyl-[acyl-carrier-protein] and UDP-N-acetyl-alpha-D-glucosamine: step 6/6. Its function is as follows. Transfers the gamma-phosphate of ATP to the 4'-position of a tetraacyldisaccharide 1-phosphate intermediate (termed DS-1-P) to form tetraacyldisaccharide 1,4'-bis-phosphate (lipid IVA). In Pasteurella multocida (strain Pm70), this protein is Tetraacyldisaccharide 4'-kinase.